A 145-amino-acid polypeptide reads, in one-letter code: Protein SprT-like (145 aa).

The region spanning 4 to 141 (TDYVKEVSRQ…CGNCHGKLRH (138 aa)) is the SprT-like domain. His64 is a Zn(2+) binding site. Residue Glu65 is part of the active site. His68 provides a ligand contact to Zn(2+).

This sequence belongs to the SprT family. It depends on Zn(2+) as a cofactor.

It localises to the cytoplasm. This is Protein SprT-like from Streptococcus mutans serotype c (strain ATCC 700610 / UA159).